The primary structure comprises 107 residues: Endonuclease ALBA3 (107 aa).

An N6-acetyllysine mark is found at K23 and K32.

This sequence belongs to the histone-like Alba family. Homodimer. Interacts (acetylated and unacetylated) with Sir2A. Requires a divalent metal cation as cofactor. Acetylated. Exists in both acetylated and unacetylated forms but predominantly in an acetylated form. Deacetylated by Sir2A.

It is found in the nucleus. Its subcellular location is the chromosome. The protein resides in the telomere. It localises to the cytoplasm. With respect to regulation, mild acetylation lowers protein interaction with DNA and high acetylation abolishes DNA-binding activity. DNA binding and endonuclease activity is modulated via deacetylation of Lys-23 by Sir2A. Inhibited in the presence of EDTA and EGTA. In terms of biological role, possesses DNA-binding and endonuclease activities. Binds DNA cooperatively in sequence-independent manner at the DNA minor groove. Exhibits apurinic/apyrimidinic site-driven endonuclease activity. Binds RNA; shows high affinity for poly(A) and a lower affinity for poly(U) templates. In vitro, prevents transcription after DNA binding. Associates with the telomeric region, the subtelomeric TARE6 repeat sequence and the var gene promoters. In Plasmodium falciparum (isolate 3D7), this protein is Endonuclease ALBA3.